The primary structure comprises 352 residues: MTEAGKLPLPLPPRLDWFVHTQMGQLAQDGVPEWFHGAISREDAENLLESQPLGSFLIRVSHSHVGYTLSYKAQSSCCHFMVKLLDDGTFMIPGEKVAHTSLDALVTFHQQKPIEPRRELLTQPCRQKDPANVDYEDLFLYSNAVAEEAACPVSAPEEASPKPVLCHQSKERKPSAEMNRITTKEATSSCPPKSPLGETRQKLWRSLKMLPERGQRVRQQLKSHLATVNLSSLLDVRRSTVISGPGTGKGSQDHSGDPTSGDRGYTDPCVATSLKSPSQPQAPKDRKVPTRKAERSVSCIEVTPGDRSWHQMVVRALSSQESKPEHQGLAEPENDQLPEEYQQPPPFAPGYC.

Residues 34–125 (WFHGAISRED…PRRELLTQPC (92 aa)) form the SH2 domain. Disordered regions lie at residues 157 to 199 (EEAS…LGET) and 241 to 352 (VISG…PGYC). Positions 180–191 (RITTKEATSSCP) are enriched in polar residues. Basic and acidic residues predominate over residues 283–295 (PKDRKVPTRKAER). Positions 343–352 (QPPPFAPGYC) are enriched in pro residues.

Interacts with FES and TNK2. In terms of processing, may be phosphorylated by FES and ACK1. As to expression, predominantly expressed in spleen and hematopoietic cells such as peripheral blood leukocytes and weakly expressed in prostate, thymus, heart, small intestine and placenta.

Its subcellular location is the cytoplasm. The protein localises to the nucleus. In terms of biological role, may be a modulator of the apoptotic response through its ability to affect mitochondrial stability. Adapter protein involved in tyrosine kinase and CD28 signaling. Seems to affect CD28-mediated activation of the RE/AP element of the interleukin-2 promoter. The chain is Hematopoietic SH2 domain-containing protein (HSH2D) from Homo sapiens (Human).